A 1859-amino-acid polypeptide reads, in one-letter code: DNA-directed RNA polymerase subunit beta'' (1859 aa).

Zn(2+) contacts are provided by C286, C359, C366, and C369.

It belongs to the RNA polymerase beta' chain family. RpoC2 subfamily. As to quaternary structure, in plastids the minimal PEP RNA polymerase catalytic core is composed of four subunits: alpha, beta, beta', and beta''. When a (nuclear-encoded) sigma factor is associated with the core the holoenzyme is formed, which can initiate transcription. Zn(2+) serves as cofactor.

The protein localises to the plastid. It localises to the chloroplast. The enzyme catalyses RNA(n) + a ribonucleoside 5'-triphosphate = RNA(n+1) + diphosphate. Functionally, DNA-dependent RNA polymerase catalyzes the transcription of DNA into RNA using the four ribonucleoside triphosphates as substrates. This is DNA-directed RNA polymerase subunit beta'' from Oltmannsiellopsis viridis (Marine flagellate).